The sequence spans 813 residues: Lon protease (813 aa).

The Lon N-terminal domain occupies 14–207 (LPLLPLRGII…ILTEILAREM (194 aa)). Position 359–366 (359–366 (GPPGVGKT)) interacts with ATP. A Lon proteolytic domain is found at 595-776 (ESQVGVATGL…DQVIREALLE (182 aa)). Active-site residues include Ser-682 and Lys-725.

It belongs to the peptidase S16 family. As to quaternary structure, homohexamer. Organized in a ring with a central cavity.

The protein resides in the cytoplasm. It carries out the reaction Hydrolysis of proteins in presence of ATP.. ATP-dependent serine protease that mediates the selective degradation of mutant and abnormal proteins as well as certain short-lived regulatory proteins. Required for cellular homeostasis and for survival from DNA damage and developmental changes induced by stress. Degrades polypeptides processively to yield small peptide fragments that are 5 to 10 amino acids long. Binds to DNA in a double-stranded, site-specific manner. The chain is Lon protease from Heliobacterium modesticaldum (strain ATCC 51547 / Ice1).